Here is a 1204-residue protein sequence, read N- to C-terminus: Cingulin (1204 aa).

Residues 7–359 (MAEPRGPVDH…VMMSSGSSKA (353 aa)) are head. The segment at 25-48 (EPVSGAEMGTLRRGGRRPAKDARA) is disordered. The ZIM signature appears at 48–62 (ASTYGVAVRVQGIAG). The interval 54–67 (AVRVQGIAGQPFVV) is interaction with TJP1/ZO1. A disordered region spans residues 68 to 269 (LNSGEKGGDS…SPLSGLSRAR (202 aa)). Phosphoserine occurs at positions 95, 96, 98, 135, 137, 140, 155, and 165. Over residues 126-140 (TQWNGKLLRSQSQAS) the composition is skewed to polar residues. The segment covering 166–190 (PGSTIDTAPLSSVDSLINKFDSQLR) has biased composition (polar residues). Positions 207-231 (EQRKRSKSLDSRLPRDTLEERERQS) are enriched in basic and acidic residues. Phosphoserine occurs at positions 214, 217, 260, 278, 340, and 353. Positions 360–1161 (VAGQGELTRK…SLEKDSWRKA (802 aa)) form a coiled coil. Position 581 is an N6-acetyllysine (K581). The disordered stretch occupies residues 1156–1182 (DSWRKASRSAAESTLKHEGLSSDEEFD). A tail region spans residues 1162–1204 (SRSAAESTLKHEGLSSDEEFDGVYDPSSIASLLTESNLQTSSC). S1176 and S1177 each carry phosphoserine.

Belongs to the cingulin family. In terms of assembly, homodimer. Interacts with TJP1/ZO1 and SPEF1.

The protein localises to the cell junction. Its subcellular location is the tight junction. Probably plays a role in the formation and regulation of the tight junction (TJ) paracellular permeability barrier. The sequence is that of Cingulin from Callithrix jacchus (White-tufted-ear marmoset).